Reading from the N-terminus, the 273-residue chain is Large ribosomal subunit protein uL2 (273 aa).

The segment at 228–273 (VDHPHGGGEGKTSGGRHPVTPWGFPTKGKKTRKNKRTSKFIIKKRK) is disordered. A compositionally biased stretch (basic residues) spans 254–273 (KGKKTRKNKRTSKFIIKKRK).

It belongs to the universal ribosomal protein uL2 family. Part of the 50S ribosomal subunit. Forms a bridge to the 30S subunit in the 70S ribosome.

One of the primary rRNA binding proteins. Required for association of the 30S and 50S subunits to form the 70S ribosome, for tRNA binding and peptide bond formation. It has been suggested to have peptidyltransferase activity; this is somewhat controversial. Makes several contacts with the 16S rRNA in the 70S ribosome. This Rickettsia bellii (strain OSU 85-389) protein is Large ribosomal subunit protein uL2.